A 352-amino-acid chain; its full sequence is N-acetyl-gamma-glutamyl-phosphate reductase (352 aa).

Residue cysteine 155 is part of the active site.

The protein belongs to the NAGSA dehydrogenase family. Type 1 subfamily.

Its subcellular location is the cytoplasm. The catalysed reaction is N-acetyl-L-glutamate 5-semialdehyde + phosphate + NADP(+) = N-acetyl-L-glutamyl 5-phosphate + NADPH + H(+). It functions in the pathway amino-acid biosynthesis; L-arginine biosynthesis; N(2)-acetyl-L-ornithine from L-glutamate: step 3/4. Catalyzes the NADPH-dependent reduction of N-acetyl-5-glutamyl phosphate to yield N-acetyl-L-glutamate 5-semialdehyde. This is N-acetyl-gamma-glutamyl-phosphate reductase from Picosynechococcus sp. (strain ATCC 27264 / PCC 7002 / PR-6) (Agmenellum quadruplicatum).